Here is a 733-residue protein sequence, read N- to C-terminus: Polyribonucleotide nucleotidyltransferase (733 aa).

D489 and D495 together coordinate Mg(2+). The 60-residue stretch at 556–615 (PKIDTIKIDVDKIKIVIGKGGETIDKIIAETGVKIDIDEEGNVSIYSSDQDAINRAKEII) folds into the KH domain. Residues 625–693 (DEVYHAKVVR…AKGRVDASMK (69 aa)) enclose the S1 motif domain. The tract at residues 691-733 (SMKVLLPRPPKSDKPKHHHDKGHHPHKEYKGHKDHQESPKTEE) is disordered. Residues 704-723 (KPKHHHDKGHHPHKEYKGHK) are compositionally biased toward basic residues. Positions 724–733 (DHQESPKTEE) are enriched in basic and acidic residues.

Belongs to the polyribonucleotide nucleotidyltransferase family. Requires Mg(2+) as cofactor.

It localises to the cytoplasm. It catalyses the reaction RNA(n+1) + phosphate = RNA(n) + a ribonucleoside 5'-diphosphate. Its function is as follows. Involved in mRNA degradation. Catalyzes the phosphorolysis of single-stranded polyribonucleotides processively in the 3'- to 5'-direction. The protein is Polyribonucleotide nucleotidyltransferase of Streptococcus sanguinis (strain SK36).